The following is a 206-amino-acid chain: LexA repressor (206 aa).

The H-T-H motif DNA-binding region spans 28–48 (RAEIAKRLGFKSANAAEEHLK). Active-site for autocatalytic cleavage activity residues include Ser-123 and Lys-160.

It belongs to the peptidase S24 family. As to quaternary structure, homodimer.

The enzyme catalyses Hydrolysis of Ala-|-Gly bond in repressor LexA.. Represses a number of genes involved in the response to DNA damage (SOS response), including recA and lexA. In the presence of single-stranded DNA, RecA interacts with LexA causing an autocatalytic cleavage which disrupts the DNA-binding part of LexA, leading to derepression of the SOS regulon and eventually DNA repair. The protein is LexA repressor of Shewanella sediminis (strain HAW-EB3).